The sequence spans 162 residues: uncharacterized protein (162 aa).

This is an uncharacterized protein from Acanthamoeba polyphaga (Amoeba).